A 430-amino-acid chain; its full sequence is MKTTIKQAKDHLNQDVTIGAWLTNKRSSGKIAFLQLRDGTGFMQGVVVKSEVDEEVFKLAKEITQESSLYVTGTITEDNRSDLGYEMQVKSIEVISEAHDYPITPKNHGTEFLMDHRHLWLRSKKQHAVMKIRNEVIRATYEFFNKDGFTKVDPPILTASAPEGTSELFHTKYFDQDAFLSQSGQLYLEAAAMAHGKVFSFGPTFRAEKSKTRRHLIEFWMIEGEMAFTNHAESLEIQEQYVTHVVKSVLENCKLELKMLERDTSKLEKVATPFPRISYDDAIEFLKAEGFDDIEWGEDFGAPHETAIANHYDLPVFITNYPTKIKPFYMQPNPENEETVLCADLIAPEGYGEIIGGSERVDDLELLEQRVKEHGLDEEAYSYYLDLRRYGSVPHCGFGLGLERTVAWISGVEHVRETAPFPRLLNRLYP.

It belongs to the class-II aminoacyl-tRNA synthetase family. Homodimer.

Its subcellular location is the cytoplasm. The enzyme catalyses tRNA(Asn) + L-asparagine + ATP = L-asparaginyl-tRNA(Asn) + AMP + diphosphate + H(+). The polypeptide is Asparagine--tRNA ligase (Staphylococcus aureus (strain MRSA252)).